The primary structure comprises 48 residues: Large ribosomal subunit protein bL32 (48 aa).

Residues 1 to 20 (MAVPKRRVSKTRAAKRRTHY) show a composition bias toward basic residues. The interval 1 to 48 (MAVPKRRVSKTRAAKRRTHYKVSLPIPVKDKDGSWKLPHRINTKTGEY) is disordered.

This sequence belongs to the bacterial ribosomal protein bL32 family.

This Campylobacter hominis (strain ATCC BAA-381 / DSM 21671 / CCUG 45161 / LMG 19568 / NCTC 13146 / CH001A) protein is Large ribosomal subunit protein bL32.